Reading from the N-terminus, the 267-residue chain is Cyclin-C (267 aa).

The 104-residue stretch at 48–151 folds into the Cyclin N-terminal domain; it reads IQVLGEQLKL…LLENLDCCLI (104 aa).

It belongs to the cyclin family. Cyclin C subfamily. As to quaternary structure, component of the Cdk8 module of the Mediator complex, composed of CycC, Cdk8, kto and skd.

The protein resides in the nucleus. Its function is as follows. Component of the Mediator complex, a coactivator involved in regulated gene transcription of nearly all RNA polymerase II-dependent genes. Mediator functions as a bridge to convey information from gene-specific regulatory proteins to the basal RNA polymerase II transcription machinery. Mediator is recruited to promoters by direct interactions with regulatory proteins and serves as a scaffold for the assembly of a functional preinitiation complex with RNA polymerase II and the general transcription factors. Binds to and activates cyclin-dependent kinase Cdk8 that phosphorylates the CTD (C-terminal domain) of the large subunit of RNA polymerase II (RNAp II), which may inhibit the formation of a transcription initiation complex. Required for leg and eye development and macrochaete specification or differentiation. In Drosophila melanogaster (Fruit fly), this protein is Cyclin-C (CycC).